Here is a 446-residue protein sequence, read N- to C-terminus: StAR-related lipid transfer protein 3 (446 aa).

The Cytoplasmic segment spans residues methionine 1–arginine 52. Residues isoleucine 47–serine 218 enclose the MENTAL domain. Residues threonine 53–leucine 73 form a helical membrane-spanning segment. Residues asparagine 74–serine 95 lie on the Extracellular side of the membrane. The chain crosses the membrane as a helical span at residues phenylalanine 96–valine 116. Topologically, residues leucine 117 to histidine 121 are cytoplasmic. Residues tryptophan 122–leucine 142 form a helical membrane-spanning segment. Topologically, residues serine 143–glycine 149 are extracellular. A helical transmembrane segment spans residues alanine 150 to leucine 170. Topologically, residues aspartate 171 to alanine 446 are cytoplasmic. An FFAT motif is present at residues glutamine 207–glutamate 213. Phosphoserine occurs at positions 210, 218, and 222. The region spanning serine 231 to alanine 444 is the START domain.

Belongs to the STARD3 family. Homodimer. Interacts (via the MENTAL domain) with STARD3NL. Interacts (via phosphorylated FFAT motif) with VAPA (via MSP domain). Interacts (via phosphorylated FFAT motif) with VAPB (via MSP domain). Interacts (via phosphorylated FFAT motif) with MOSPD2 (via MSP domain); this interaction allows enrichment of MOSPD2 around endosomes. Post-translationally, phosphorylation at Ser-210 is necessary and sufficient for the direct interaction of the phosphorylated FFAT motif with the MSP domain of MOSPD2, VAPA and VAPB and allows the tethering of two membranes that participates in the formation of ER-endosome contacts. Phosphorylation of the FFAT motif leads to conformation changes. Additional phosphorylations around the core FFAT motif (QFYSPPE) are not essential but strengthen the interaction with MOSPD2, VAPA and VAPB. Phosphorylation at Ser-210 of FFAT motif drives membrane tethering between the endoplasmic reticulum and late endosomes via interaction with VAPA and VAPB that in turn allows the efficient transport of sterol mediated by the START domain.

It localises to the late endosome membrane. The catalysed reaction is cholesterol(in) = cholesterol(out). Functionally, sterol-binding protein that mediates cholesterol transport from the endoplasmic reticulum to endosomes. The sterol transport mechanism is triggered by phosphorylation of FFAT motif that leads to membrane tethering between the endoplasmic reticulum and late endosomes via interaction with VAPA and VAPB. Acts as a lipid transfer protein that redirects sterol to the endosome at the expense of the cell membrane and favors membrane formation inside endosomes. May also mediate cholesterol transport between other membranes, such as mitochondria membrane or cell membrane. However, such results need additional experimental evidences; probably mainly mediates cholesterol transport from the endoplasmic reticulum to endosomes. Does not activate transcriptional cholesterol sensing. Able to bind other lipids, such as lutein, a xanthophyll carotenoids that form the macular pigment of the retina. This is StAR-related lipid transfer protein 3 from Mus musculus (Mouse).